A 216-amino-acid polypeptide reads, in one-letter code: Small ribosomal subunit protein uS3c (216 aa).

Residues isoleucine 43–threonine 118 enclose the KH type-2 domain.

Belongs to the universal ribosomal protein uS3 family. In terms of assembly, part of the 30S ribosomal subunit.

It localises to the plastid. It is found in the chloroplast. This Eucalyptus globulus subsp. globulus (Tasmanian blue gum) protein is Small ribosomal subunit protein uS3c (rps3).